The sequence spans 120 residues: Immunoglobulin kappa variable 2-112 (120 aa).

A signal peptide spans 1 to 20; it reads MRCSLQFLGVLMFWISGVSG. The interval 21-43 is framework-1; sequence DIVITQDELSNPVTSGESVSISC. Cysteines 43 and 113 form a disulfide. Positions 44-59 are complementarity-determining-1; the sequence is RSSKSLLYKDGKTYLN. Residues 60-74 form a framework-2 region; it reads WFLQRPGQSPQLLIY. The segment at 75–81 is complementarity-determining-2; it reads LMSTRAS. Residues 82-113 are framework-3; the sequence is GVSDRFSGSGSGTDFTLEISRVKAEDVGVYYC. The complementarity-determining-3 stretch occupies residues 114 to 120; the sequence is QQLVEYP.

The polypeptide is Immunoglobulin kappa variable 2-112 (Mus musculus (Mouse)).